A 241-amino-acid polypeptide reads, in one-letter code: CRISPR-associated endoribonuclease Cas6 2 (241 aa).

Catalysis depends on Y28, which acts as the Proton acceptor. The active-site Proton donor is the H40.

It belongs to the CRISPR-associated protein Cas6/Cse3/CasE family.

CRISPR (clustered regularly interspaced short palindromic repeat) is an adaptive immune system that provides protection against mobile genetic elements (viruses, transposable elements and conjugative plasmids). CRISPR clusters contain sequences complementary to antecedent mobile elements and target invading nucleic acids. CRISPR clusters are transcribed and processed into CRISPR RNA (crRNA). This protein processes pre-crRNA into individual crRNA units. The protein is CRISPR-associated endoribonuclease Cas6 2 (cas6b) of Methanocaldococcus jannaschii (strain ATCC 43067 / DSM 2661 / JAL-1 / JCM 10045 / NBRC 100440) (Methanococcus jannaschii).